Consider the following 254-residue polypeptide: Probable transcriptional regulator ycf27 (254 aa).

The Response regulatory domain occupies 16 to 129 (KVLIVDDEAS…ELEARIRAVL (114 aa)). A 4-aspartylphosphate modification is found at Asp-65. Positions 85-103 (DVPIIMLTALGDVADRITG) form a DNA-binding region, H-T-H motif. The ompR/PhoB-type DNA-binding region spans 144–245 (SGIINFNFLT…ARGTGYLFQR (102 aa)).

Its subcellular location is the plastid. It is found in the chloroplast. In terms of biological role, probable promoter-specific protein mediating the interaction between DNA and RNA polymerase. The chain is Probable transcriptional regulator ycf27 (ycf27) from Guillardia theta (Cryptophyte).